We begin with the raw amino-acid sequence, 311 residues long: Malate dehydrogenase (311 aa).

Residues 7–13 (GAAGGIG) and Asp-34 each bind NAD(+). Arg-81 and Arg-87 together coordinate substrate. NAD(+) is bound by residues Asn-94 and 117–119 (ITN). Positions 119 and 153 each coordinate substrate. His-177 functions as the Proton acceptor in the catalytic mechanism. Met-227 provides a ligand contact to NAD(+).

The protein belongs to the LDH/MDH superfamily. MDH type 1 family. In terms of assembly, homodimer.

The catalysed reaction is (S)-malate + NAD(+) = oxaloacetate + NADH + H(+). Its function is as follows. Catalyzes the reversible oxidation of malate to oxaloacetate. The protein is Malate dehydrogenase of Haemophilus influenzae (strain PittGG).